Reading from the N-terminus, the 144-residue chain is Large ribosomal subunit protein uL15 (144 aa).

The interval 1 to 52 (MRLNTLSPANGARHSRKRLGRGIGSGFGKTSGRGHKGQKSRSGSSIRRGFEG) is disordered. The span at 21–31 (RGIGSGFGKTS) shows a compositional bias: gly residues.

The protein belongs to the universal ribosomal protein uL15 family. In terms of assembly, part of the 50S ribosomal subunit.

Its function is as follows. Binds to the 23S rRNA. The polypeptide is Large ribosomal subunit protein uL15 (Buchnera aphidicola subsp. Acyrthosiphon pisum (strain 5A)).